A 220-amino-acid polypeptide reads, in one-letter code: Guanylate kinase (220 aa).

Residues 14-194 (GLMVVISSPS…SYAAIKSIIN (181 aa)) form the Guanylate kinase-like domain. Residue 21 to 28 (SPSGAGKS) coordinates ATP.

It belongs to the guanylate kinase family.

It is found in the cytoplasm. It catalyses the reaction GMP + ATP = GDP + ADP. In terms of biological role, essential for recycling GMP and indirectly, cGMP. The protein is Guanylate kinase of Brucella abortus (strain 2308).